A 654-amino-acid polypeptide reads, in one-letter code: Protein THALLO (654 aa).

Residues 1 to 16 show a composition bias toward basic residues; the sequence is MGKKGGTLKRSSKSTK. 3 disordered regions span residues 1-23, 35-145, and 164-212; these read MGKK…DIVE, KQRD…SDDE, and SITA…KDTH. Residues 2–9 carry the Nuclear localization signal 1 motif; that stretch reads GKKGGTLK. 3 stretches are compositionally biased toward acidic residues: residues 44 to 56, 64 to 82, and 103 to 114; these read VNDD…EDDV, GVDD…EEAE, and GDDEMADDDKDK. Residues 140-160 are a coiled coil; sequence LSSDDEDIKAEEEEVIRLRAE. A compositionally biased stretch (acidic residues) spans 171-181; the sequence is GLDDDSEEDSD. The segment covering 182 to 212 has biased composition (basic and acidic residues); it reads RELTMEEISDKGKQATKSITDKKEKGDKDTH. The stretch at 243 to 263 forms a coiled coil; that stretch reads LSELNDAVEELESKINPVMNK. Disordered stretches follow at residues 362–397, 470–492, and 509–654; these read SDSV…HQND, VSTK…DDIG, and KSSE…SIRM. Basic and acidic residues predominate over residues 364–387; it reads SVDRITQDTAKPMKIDNAREEKKK. Acidic residues predominate over residues 524–546; the sequence is SDDEDDNDGDNNDMVDNDGESED. The span at 552–561 shows a compositional bias: basic residues; sequence VKQKQQAKRA. Residues 588-599 are compositionally biased toward polar residues; it reads SNQMVSNRGLTR. The Nuclear localization signal 2 motif lies at 608–615; it reads PRKKYRKN. Over residues 645–654 the composition is skewed to polar residues; it reads NPNTSRSIRM.

This sequence belongs to the SAS10 family. In terms of assembly, interacts with NUCL1, NUCL2, JMJ14, NOF1 and MPP10 in the nucleus. In terms of tissue distribution, mainly present in tissues undergoing rapid cellular growth and differentiation. Mostly expressed in shoots and flowers, and, to a lower extent, in leaves, siliques, roots and seedlings.

The protein localises to the nucleus. It localises to the nucleolus. Essential protein during embryogenesis. Involved both in gene transcription regulation and in processing events critical for proper rRNA biogenesis and nucleolar organization during reproduction; contributes to pre-rRNA processing at the 5' external transcribed spacer. Binds RNA. This is Protein THALLO from Arabidopsis thaliana (Mouse-ear cress).